Consider the following 239-residue polypeptide: Octanoyltransferase (239 aa).

Residues 59 to 239 (PFSPQAVWLL…KRRFKLNWEK (181 aa)) form the BPL/LPL catalytic domain. Substrate contacts are provided by residues 101-108 (RGGEVTHH), 168-170 (SIG), and 181-183 (GFS). Cys-199 serves as the catalytic Acyl-thioester intermediate.

The protein belongs to the LipB family.

The protein localises to the cytoplasm. The enzyme catalyses octanoyl-[ACP] + L-lysyl-[protein] = N(6)-octanoyl-L-lysyl-[protein] + holo-[ACP] + H(+). Its pathway is protein modification; protein lipoylation via endogenous pathway; protein N(6)-(lipoyl)lysine from octanoyl-[acyl-carrier-protein]: step 1/2. In terms of biological role, catalyzes the transfer of endogenously produced octanoic acid from octanoyl-acyl-carrier-protein onto the lipoyl domains of lipoate-dependent enzymes. Lipoyl-ACP can also act as a substrate although octanoyl-ACP is likely to be the physiological substrate. The chain is Octanoyltransferase from Prochlorococcus marinus (strain NATL2A).